The following is a 396-amino-acid chain: MAKAKFERTKPHVNIGTIGHVDHGKTTLTAAITRVLAERGQAEFKGFDQIDNAPEERERGITIATSHVEYETEKRHYAHVDCPGHADYVKNMITGAAQMDGAILVVSAADGPMPQTREHILLARQVGVPYIVVFLNKADMVDDEELLELVELEIRELLSSYDFPGDDIPIIKGSALKALNGDKDELGSEAIVKLMDAVDAYIPEPERAIDKPFLMPVEDVFSISGRGTVATGRVERGVVKVGEEVEIVGIKTTTKTTVTGVEMFRKLLDEGRAGDNIGALLRGVKREDIERGQVLARPGSITPHTKFKAEAYILTKEEGGRHTPFFNGYRPQFYFRTTDVTGIVDLPAGTEMVMPGDNVAVTVNLITPIAMDEGLRFAIREGGRTVGAGVVSSIIE.

Positions 10 to 206 constitute a tr-type G domain; that stretch reads KPHVNIGTIG…AVDAYIPEPE (197 aa). The G1 stretch occupies residues 19 to 26; that stretch reads GHVDHGKT. 19–26 serves as a coordination point for GTP; it reads GHVDHGKT. Position 26 (Thr26) interacts with Mg(2+). The G2 stretch occupies residues 60–64; that stretch reads GITIA. The tract at residues 81-84 is G3; the sequence is DCPG. GTP contacts are provided by residues 81–85 and 136–139; these read DCPGH and NKAD. The segment at 136–139 is G4; it reads NKAD. The segment at 174–176 is G5; the sequence is SAL.

It belongs to the TRAFAC class translation factor GTPase superfamily. Classic translation factor GTPase family. EF-Tu/EF-1A subfamily. Monomer.

The protein localises to the cytoplasm. It carries out the reaction GTP + H2O = GDP + phosphate + H(+). GTP hydrolase that promotes the GTP-dependent binding of aminoacyl-tRNA to the A-site of ribosomes during protein biosynthesis. In Geobacter metallireducens (strain ATCC 53774 / DSM 7210 / GS-15), this protein is Elongation factor Tu.